Consider the following 183-residue polypeptide: Regulatory protein RecX (183 aa).

Residues 1 to 12 (MTSFPHPSTSES) are compositionally biased toward polar residues. Positions 1-26 (MTSFPHPSTSESGPDPDSEPNREEQA) are disordered.

Belongs to the RecX family.

It is found in the cytoplasm. Its function is as follows. Modulates RecA activity. The polypeptide is Regulatory protein RecX (Mycobacterium sp. (strain JLS)).